We begin with the raw amino-acid sequence, 738 residues long: MTTDSSMPATVIGKAEFSNTKAASEFGTNLSRWRLNVDNGRHMWEYLESEDEARKRPQSILEKYWLGLPYELPARPRATRALEAVENGWEFFKRLQTADGHWGCNDDGPLFVTSGMVIARYIVGIPIDSHMKQEMCRYLLNVVNEDGGWGLFIQSPSTVFGTVMNYCMLRILGLGPEHPAMARARNTLHRLGSASATPTWGKFWLCVLGVYEWEGMIPLPPEPLLVPASLPFNPGKWWVHTRNVYISMSYLYGHRFSMPPNKLVQALRDELYDIPYEQINWPAQRTNVSAADRLTDPTWIQRSFTSALTTYETFKIPFLRRRALNEALFQIETETRNTHYLCIAPVSFASNMLALYHAHGRDSHWIRGMRDRFIDPMWLCREGLAASGTNGTSLWDTALTVQATIDAGLAARPENQAILRKALEFIDNSQIREDPLGVHHVYRQPTRGAWPFSTRDQSYAVSDTTAEAVKVVVLLQQIEGFPSRISDERLQQAIDLILGMENAGGGFSAYEPVRGPKFLELLNITELYENVMTDNLYPECTSSVIMSLTTFAREYPTYRARDIQACVSRSVDYLLRSQYPNGGWFASWGVCFTYATMFALQGLACMGRNESNCAACQRACSFLLQHQNPDGGWGESLDTVRFKQYLPHPDGSQVTNTAYAVIGLLAARCGNHEAIRRGVAYLMKEQQDTGEWLPGALEGVFAPPGGMRYPNYKFHFTLMALGRYAAVHGDECLAAQLV.

The stretch at 132 to 173 (KQEMCRYLLNVVNEDGGWGLFIQSPSTVFGTVMNYCMLRILG) is one PFTB 1 repeat. Aspartate 463 serves as the catalytic Proton donor. 3 PFTB repeats span residues 490-531 (LQQA…YENV), 567-607 (VSRS…ACMG), and 616-663 (CQRA…AVIG).

Belongs to the terpene cyclase/mutase family.

It carries out the reaction (S)-2,3-epoxysqualene = (17Z)-protosta-17(20),24-dien-3beta-ol. Its function is as follows. Protostadienol synthase which cyclizes (3S)-oxidosqualene to (17Z)-protosta-17(20),24-dien-3-beta-ol (protostadienol), the biosynthetic precursor of helvolic acid, a secondary metabolite which promotes virulence. This is Protostadienol synthase A (pdsA) from Neosartorya fischeri (strain ATCC 1020 / DSM 3700 / CBS 544.65 / FGSC A1164 / JCM 1740 / NRRL 181 / WB 181) (Aspergillus fischerianus).